The sequence spans 122 residues: Small ribosomal subunit protein uS13 (122 aa).

Residues R99–K122 form a disordered region.

It belongs to the universal ribosomal protein uS13 family. Part of the 30S ribosomal subunit. Forms a loose heterodimer with protein S19. Forms two bridges to the 50S subunit in the 70S ribosome.

Its function is as follows. Located at the top of the head of the 30S subunit, it contacts several helices of the 16S rRNA. In the 70S ribosome it contacts the 23S rRNA (bridge B1a) and protein L5 of the 50S subunit (bridge B1b), connecting the 2 subunits; these bridges are implicated in subunit movement. Contacts the tRNAs in the A and P-sites. The chain is Small ribosomal subunit protein uS13 from Rhodopseudomonas palustris (strain BisA53).